The primary structure comprises 419 residues: Peptide chain release factor subunit 1 (419 aa).

The protein belongs to the eukaryotic release factor 1 family. Heterodimer of two subunits, one of which binds GTP.

The protein resides in the cytoplasm. Its function is as follows. Directs the termination of nascent peptide synthesis (translation) in response to the termination codons UAA, UAG and UGA. This is Peptide chain release factor subunit 1 from Methanococcus maripaludis (strain DSM 14266 / JCM 13030 / NBRC 101832 / S2 / LL).